A 78-amino-acid chain; its full sequence is Large ribosomal subunit protein bL28 (78 aa).

Belongs to the bacterial ribosomal protein bL28 family.

The sequence is that of Large ribosomal subunit protein bL28 from Acaryochloris marina (strain MBIC 11017).